We begin with the raw amino-acid sequence, 453 residues long: Phosphoglucosamine mutase (453 aa).

Serine 105 (phosphoserine intermediate) is an active-site residue. 4 residues coordinate Mg(2+): serine 105, aspartate 244, aspartate 246, and aspartate 248. Residue serine 105 is modified to Phosphoserine.

The protein belongs to the phosphohexose mutase family. It depends on Mg(2+) as a cofactor. In terms of processing, activated by phosphorylation.

It carries out the reaction alpha-D-glucosamine 1-phosphate = D-glucosamine 6-phosphate. Functionally, catalyzes the conversion of glucosamine-6-phosphate to glucosamine-1-phosphate. In Chromohalobacter salexigens (strain ATCC BAA-138 / DSM 3043 / CIP 106854 / NCIMB 13768 / 1H11), this protein is Phosphoglucosamine mutase.